The primary structure comprises 158 residues: Protein GLUTAMINE DUMPER 1 (158 aa).

Residues 1-36 (MRPLSVQSKFEDVATSTSVNHHGVTPQSPWHSPVPY) are Extracellular-facing. A helical transmembrane segment spans residues 37-57 (LFGGLAAMLGLIAFALLILAC). Residues 58 to 158 (SYWRLSSSGE…DTGETTTTSH (101 aa)) lie on the Cytoplasmic side of the membrane. The tract at residues 65 to 85 (SGEEDGQNVDEEKESRSGDKA) is disordered. Over residues 66-76 (GEEDGQNVDEE) the composition is skewed to acidic residues. Residues 96-100 (VIMAG) carry the VIMAG motif. The segment at 126–158 (ISQEESVAKEEEKMREGEEEKVKDTGETTTTSH) is disordered. Basic and acidic residues predominate over residues 131 to 151 (SVAKEEEKMREGEEEKVKDTG).

Belongs to the GLUTAMINE DUMPER 1 (TC 9.B.60) family. Interacts with LOG2. In terms of processing, ubiquitinated by LOG2 (in vitro). In terms of tissue distribution, expressed in the vascular tissues and in hydathodes. Expressed in the phloem and xylem (at the protein level).

It is found in the cell membrane. Probable subunit of an amino acid transporter involved in the regulation of the amino acid metabolism. Stimulates amino acid export by activating nonselective amino acid facilitators. Required the interaction with the RING-type E3 ubiquitin-protein ligase LOG2 to fulfill its function. Plays a role in the Gln export at hydathodes, at xylem parenchyma into xylem sap and from mesophyll into leaf apoplasm. Acts upstream genes involved in the salicylic acid (SA) pathway and in the geminivirus-host interaction. This is Protein GLUTAMINE DUMPER 1 (GDU1) from Arabidopsis thaliana (Mouse-ear cress).